Here is a 500-residue protein sequence, read N- to C-terminus: Cysteine--tRNA ligase (500 aa).

Cys-29 is a binding site for Zn(2+). A 'HIGH' region motif is present at residues 31-41 (VTVYDLCHLGH). Positions 213, 238, and 242 each coordinate Zn(2+). The 'KMSKS' region motif lies at 270-274 (KMSKS). Lys-273 is a binding site for ATP.

It belongs to the class-I aminoacyl-tRNA synthetase family. As to quaternary structure, monomer. Requires Zn(2+) as cofactor.

Its subcellular location is the cytoplasm. It carries out the reaction tRNA(Cys) + L-cysteine + ATP = L-cysteinyl-tRNA(Cys) + AMP + diphosphate. The chain is Cysteine--tRNA ligase from Prochlorococcus marinus (strain NATL1A).